The following is a 233-amino-acid chain: Bcl-2-like protein 1 (233 aa).

Positions 4 to 24 match the BH4 motif; it reads SNRELVVDFLSYKLSQKGYSW. Residues 28-71 are disordered; sequence SDVEENRTEAPEGTESEMETPSAINGNPSWHLADSPAVNGATGH. A Phosphoserine; by PLK3 modification is found at Ser49. A Phosphoserine; by CDK1 modification is found at Ser62. A BH3 motif is present at residues 86 to 100; the sequence is VKQALREAGDEFELR. The BH1 motif lies at 129–148; it reads ELFRDGVNWGRIVAFFSFGG. A BH2 motif is present at residues 180–195; that stretch reads PWIQENGGWDTFVELY. A helical transmembrane segment spans residues 210–226; that stretch reads FNRWFLTGMTVAGVVLL.

Belongs to the Bcl-2 family. As to quaternary structure, homodimer. Interacts with BCL2L11. Interacts with BAD. Interacts with PGAM5. Interacts with HEBP2. Interacts with p53/TP53 and BBC3; interaction with BBC3 disrupts the interaction with p53/TP53. Interacts with ATP5F1A and ATP5F1B; the interactions mediate the association of isoform Bcl-X(L) with the mitochondrial membrane ATP synthase F(1)F(0) ATP synthase. Interacts with VDAC1. Interacts with BCL2L11 (via BH3). Interacts with RNF183. Interacts with GIMAP3/IAN4 and GIMAP5/IAN5. Interacts with GIMAP5 and HSPA8/HSC70; the interaction between HSPA8 and BCL2L1 is impaired in the absence of GIMAP5. Interacts with isoform 4 of CLU; this interaction releases and activates BAX and promotes cell death. Forms heterodimers with BAX, BAK or BCL2; heterodimerization with BAX does not seem to be required for anti-apoptotic activity. Interacts with isoform 1 of SIVA1; the interaction inhibits the anti-apoptotic activity. Interacts with IKZF3. Interacts with RTL10/BOP. Interacts with DNM1L and CLTA; DNM1L and BCL2L1 isoform BCL-X(L) may form a complex in synaptic vesicles that also contains clathrin and MFF. Interacts (via the loop between motifs BH4 and BH3) with NLRP1 (via LRR repeats), but not with NLRP2, NLRP3, NLRP4, PYCARD, nor MEFV. Interacts with BECN1. Post-translationally, proteolytically cleaved by caspases during apoptosis. The cleaved protein, lacking the BH4 motif, has pro-apoptotic activity. In terms of processing, phosphorylated on Ser-62 by CDK1. This phosphorylation is partial in normal mitotic cells, but complete in G2-arrested cells upon DNA-damage, thus promoting subsequent apoptosis probably by triggering caspases-mediated proteolysis. Phosphorylated by PLK3, leading to regulate the G2 checkpoint and progression to cytokinesis during mitosis. Phosphorylation at Ser-49 appears during the S phase and G2, disappears rapidly in early mitosis during prometaphase, metaphase and early anaphase, and re-appears during telophase and cytokinesis. Ubiquitinated by RNF183 during prolonged ER stress, leading to degradation by the proteosome. As to expression, bcl-X(S) is expressed at high levels in cells that undergo a high rate of turnover, such as developing lymphocytes. In contrast, Bcl-X(L) is found in tissues containing long-lived postmitotic cells, such as adult brain.

The protein resides in the mitochondrion inner membrane. It is found in the mitochondrion outer membrane. The protein localises to the mitochondrion matrix. Its subcellular location is the cytoplasmic vesicle. It localises to the secretory vesicle. The protein resides in the synaptic vesicle membrane. It is found in the cytoplasm. The protein localises to the cytosol. Its subcellular location is the cytoskeleton. It localises to the microtubule organizing center. The protein resides in the centrosome. It is found in the nucleus membrane. Potent inhibitor of cell death. Inhibits activation of caspases. Appears to regulate cell death by blocking the voltage-dependent anion channel (VDAC) by binding to it and preventing the release of the caspase activator, CYC1, from the mitochondrial membrane. Also acts as a regulator of G2 checkpoint and progression to cytokinesis during mitosis. Functionally, isoform Bcl-X(L) also regulates presynaptic plasticity, including neurotransmitter release and recovery, number of axonal mitochondria as well as size and number of synaptic vesicle clusters. During synaptic stimulation, increases ATP availability from mitochondria through regulation of mitochondrial membrane ATP synthase F(1)F(0) activity and regulates endocytic vesicle retrieval in hippocampal neurons through association with DMN1L and stimulation of its GTPase activity in synaptic vesicles. May attenuate inflammation impairing NLRP1-inflammasome activation, hence CASP1 activation and IL1B release. Its function is as follows. Isoform Bcl-X(S) promotes apoptosis. The sequence is that of Bcl-2-like protein 1 (BCL2L1) from Homo sapiens (Human).